Here is a 236-residue protein sequence, read N- to C-terminus: Urease accessory protein UreF (236 aa).

Belongs to the UreF family. UreD, UreF and UreG form a complex that acts as a GTP-hydrolysis-dependent molecular chaperone, activating the urease apoprotein by helping to assemble the nickel containing metallocenter of UreC. The UreE protein probably delivers the nickel.

The protein resides in the cytoplasm. Its function is as follows. Required for maturation of urease via the functional incorporation of the urease nickel metallocenter. This is Urease accessory protein UreF from Granulibacter bethesdensis (strain ATCC BAA-1260 / CGDNIH1).